The primary structure comprises 910 residues: Protein translocase subunit SecA (910 aa).

ATP is bound by residues Q86, 104-108 (GEGKT), and D499. Positions 894, 896, 905, and 906 each coordinate Zn(2+).

Belongs to the SecA family. As to quaternary structure, monomer and homodimer. Part of the essential Sec protein translocation apparatus which comprises SecA, SecYEG and auxiliary proteins SecDF-YajC and YidC. The cofactor is Zn(2+).

The protein localises to the cell inner membrane. It is found in the cytoplasm. The enzyme catalyses ATP + H2O + cellular proteinSide 1 = ADP + phosphate + cellular proteinSide 2.. Part of the Sec protein translocase complex. Interacts with the SecYEG preprotein conducting channel. Has a central role in coupling the hydrolysis of ATP to the transfer of proteins into and across the cell membrane, serving both as a receptor for the preprotein-SecB complex and as an ATP-driven molecular motor driving the stepwise translocation of polypeptide chains across the membrane. This Rickettsia bellii (strain OSU 85-389) protein is Protein translocase subunit SecA.